A 347-amino-acid chain; its full sequence is BSD domain-containing protein C22A12.14c (347 aa).

T123 and T125 each carry phosphothreonine. Positions 167–219 constitute a BSD domain; the sequence is WEKEISIDGKTEEISLLLEEYPDLRKQMESLVPSEVSYDDFWKRFFWHKEVVQ. Residues 229-347 are disordered; sequence DEEEIFSWGD…DDDEDDDDWE (119 aa). Phosphoserine is present on residues S235, S241, and S246. Acidic residues predominate over residues 240–251; sequence RSDEEESDNEQV. A compositionally biased stretch (basic and acidic residues) spans 297 to 312; it reads HDGEVDGEVKEEEENK. The segment covering 313–325 has biased composition (low complexity); that stretch reads VSSSSNIEASQSS. The segment covering 327 to 337 has biased composition (basic and acidic residues); that stretch reads EVKDEANRKVD. Over residues 338 to 347 the composition is skewed to acidic residues; the sequence is DDDEDDDDWE.

The protein localises to the cytoplasm. This is BSD domain-containing protein C22A12.14c from Schizosaccharomyces pombe (strain 972 / ATCC 24843) (Fission yeast).